Consider the following 395-residue polypeptide: Protein phosphatase PP2A regulatory subunit A (395 aa).

HEAT repeat units follow at residues 44 to 81 (DCLA…AVGP), 83 to 120 (STKT…ILSP), 122 to 159 (LAIQ…VLGK), 161 to 198 (ATIE…VIGI), 200 to 237 (LLSQ…QLGV), 239 to 276 (FFDD…EEFG), 279 to 316 (WAMQ…VLGS), and 318 to 355 (ITST…IVDE).

This sequence belongs to the phosphatase 2A regulatory subunit A family. In terms of assembly, PP2A exists in several trimeric forms, all of which consist of a core composed of a catalytic subunit associated with a 65 kDa regulatory subunit (PR65) (subunit A). The core complex associates with a third, variable subunit (subunit B), which confers distinct properties to the holoenzyme.

Functionally, the PR65 subunit of protein phosphatase 2A serves as a scaffolding molecule to coordinate the assembly of the catalytic subunit and a variable regulatory B subunit. The protein is Protein phosphatase PP2A regulatory subunit A of Pisum sativum (Garden pea).